We begin with the raw amino-acid sequence, 113 residues long: MTDTHSIAQPFEAEVSPANNRQLTVSYASRYPDYSRIPAITLKGQWLEAAGFATGTAVDVKVMEGCIVLTAQPPAAAESELMQSLRQVCKLSARKQRQVQEFIGVIAGKQKVA.

The SpoVT-AbrB domain maps to 29 to 74 (SRYPDYSRIPAITLKGQWLEAAGFATGTAVDVKVMEGCIVLTAQPP).

The protein belongs to the SymE family.

It localises to the cytoplasm. In terms of biological role, involved in the degradation and recycling of damaged RNA. It is itself a target for degradation by the ATP-dependent protease Lon. The chain is Endoribonuclease SymE from Escherichia coli O6:K15:H31 (strain 536 / UPEC).